A 265-amino-acid chain; its full sequence is Undecaprenyl-diphosphatase (265 aa).

Helical transmembrane passes span 1 to 21 (MDFLQSIILGIIQGITEFLPI), 39 to 59 (QGVGFDLAVHVGTLLAVILYF), 87 to 107 (WAVVVGTIPACIAGILLLDYI), 110 to 130 (ALRAVGVIITTTVVFAVLLAA), 144 to 164 (IGFKDAIIVGLAQAVALIPGT), 187 to 207 (FSFFMAIPITAAAALVKLLTI), 217 to 237 (LGFLVGGIVSFLTAITAIHFF), and 244 to 264 (FGMWPYVIYRLVLAVVLYLLF).

It belongs to the UppP family.

The protein resides in the cell inner membrane. It catalyses the reaction di-trans,octa-cis-undecaprenyl diphosphate + H2O = di-trans,octa-cis-undecaprenyl phosphate + phosphate + H(+). Functionally, catalyzes the dephosphorylation of undecaprenyl diphosphate (UPP). Confers resistance to bacitracin. In Idiomarina loihiensis (strain ATCC BAA-735 / DSM 15497 / L2-TR), this protein is Undecaprenyl-diphosphatase.